We begin with the raw amino-acid sequence, 308 residues long: MNQPLQHTTVLLDEAVHALLGDGDAPAGTFVDGTFGRGGHSRLILQRLGPQGRLVAFDKDTEAIQAAARITDARFSIRHQGFSHLGELPAASVSGVLLDLGVSSPQIDDPQRGFSFRFDGPLDMRMDTTRGQSVAEWLADAEAAQIAEVIRDYGEERFAGPIAKAIVARRTERGPISSTAELADIVAGAVKTREPGQNPATRTFQALRIFINAELEELQQALEGSLRVLRPGGRLVVISFHSLEDRIVKQFIAQHSKEVYDRRAPFAPPQPMRLKALERIKPSTDEVAANARARSAVMRVAERTEVPA.

Residues 38 to 40 (GGH), aspartate 58, phenylalanine 82, aspartate 99, and glutamine 106 each bind S-adenosyl-L-methionine.

This sequence belongs to the methyltransferase superfamily. RsmH family.

It localises to the cytoplasm. The catalysed reaction is cytidine(1402) in 16S rRNA + S-adenosyl-L-methionine = N(4)-methylcytidine(1402) in 16S rRNA + S-adenosyl-L-homocysteine + H(+). Specifically methylates the N4 position of cytidine in position 1402 (C1402) of 16S rRNA. The chain is Ribosomal RNA small subunit methyltransferase H from Acidovorax ebreus (strain TPSY) (Diaphorobacter sp. (strain TPSY)).